The following is a 347-amino-acid chain: D-alanine--D-alanine ligase (347 aa).

The ATP-grasp domain occupies 134–332 (KLYAKDLGVK…LAQSLPKTPK (199 aa)). Position 161–216 (161–216 (LMNFNFPFIIKPNNAGSSLGVNVVKEEKELVYALDGAFEYSKEVLIEPFIQGVKEY)) interacts with ATP. The Mg(2+) site is built by D288, E300, and N302.

This sequence belongs to the D-alanine--D-alanine ligase family. The cofactor is Mg(2+). Mn(2+) is required as a cofactor.

Its subcellular location is the cytoplasm. It catalyses the reaction 2 D-alanine + ATP = D-alanyl-D-alanine + ADP + phosphate + H(+). Its pathway is cell wall biogenesis; peptidoglycan biosynthesis. Functionally, cell wall formation. The chain is D-alanine--D-alanine ligase from Helicobacter pylori (strain ATCC 700392 / 26695) (Campylobacter pylori).